Consider the following 227-residue polypeptide: Mediator of RNA polymerase II transcription subunit 18 (227 aa).

It belongs to the Mediator complex subunit 18 family. In terms of assembly, component of the Mediator complex.

Its subcellular location is the nucleus. Functionally, component of the Mediator complex, a coactivator involved in the regulated transcription of nearly all RNA polymerase II-dependent genes. Mediator functions as a bridge to convey information from gene-specific regulatory proteins to the basal RNA polymerase II transcription machinery. Mediator is recruited to promoters by direct interactions with regulatory proteins and serves as a scaffold for the assembly of a functional preinitiation complex with RNA polymerase II and the general transcription factors. The polypeptide is Mediator of RNA polymerase II transcription subunit 18 (mdt-18) (Caenorhabditis briggsae).